The chain runs to 119 residues: Large ribosomal subunit protein uL18 (119 aa).

This sequence belongs to the universal ribosomal protein uL18 family. As to quaternary structure, part of the 50S ribosomal subunit; part of the 5S rRNA/L5/L18/L25 subcomplex. Contacts the 5S and 23S rRNAs.

In terms of biological role, this is one of the proteins that bind and probably mediate the attachment of the 5S RNA into the large ribosomal subunit, where it forms part of the central protuberance. This Clostridium botulinum (strain Langeland / NCTC 10281 / Type F) protein is Large ribosomal subunit protein uL18.